Here is a 142-residue protein sequence, read N- to C-terminus: MKTFTAKPETVKRDWFVVDAAGQTLGRLATEIASRLRGKHKPEYTPHVDTGDYIVVINAEQIRVTGAKTTDKIYYSHSGFPGGIKSINFEKLIAKAPERVIETAVKGMLPKNPLGRDMYRKLKVYAGAVHPHTAQQPQELKF.

Belongs to the universal ribosomal protein uL13 family. Part of the 50S ribosomal subunit.

In terms of biological role, this protein is one of the early assembly proteins of the 50S ribosomal subunit, although it is not seen to bind rRNA by itself. It is important during the early stages of 50S assembly. The sequence is that of Large ribosomal subunit protein uL13 from Pseudomonas syringae pv. syringae (strain B728a).